The following is a 983-amino-acid chain: Probable beta-galactosidase C (983 aa).

The N-terminal stretch at 1–23 is a signal peptide; sequence MRIFSFLFLLLLGILTGQGLVSG. Substrate is bound by residues Tyr82, Asn127, Ala128, Glu129, and Asn187. The Proton donor role is filled by Glu188. Asn197 carries N-linked (GlcNAc...) asparagine glycosylation. Tyr251 serves as a coordination point for substrate. The cysteines at positions 257 and 304 are disulfide-linked. An N-linked (GlcNAc...) asparagine glycan is attached at Asn276. Glu287 serves as the catalytic Nucleophile. Substrate is bound at residue Tyr353. N-linked (GlcNAc...) asparagine glycans are attached at residues Asn391, Asn434, Asn466, Asn516, Asn601, Asn676, Asn714, Asn719, and Asn804.

This sequence belongs to the glycosyl hydrolase 35 family.

It localises to the secreted. It carries out the reaction Hydrolysis of terminal non-reducing beta-D-galactose residues in beta-D-galactosides.. Its function is as follows. Cleaves beta-linked terminal galactosyl residues from gangliosides, glycoproteins, and glycosaminoglycans. The sequence is that of Probable beta-galactosidase C (lacC) from Neosartorya fischeri (strain ATCC 1020 / DSM 3700 / CBS 544.65 / FGSC A1164 / JCM 1740 / NRRL 181 / WB 181) (Aspergillus fischerianus).